The chain runs to 505 residues: Maturase K (505 aa).

It belongs to the intron maturase 2 family. MatK subfamily.

It localises to the plastid. The protein resides in the chloroplast. In terms of biological role, usually encoded in the trnK tRNA gene intron. Probably assists in splicing its own and other chloroplast group II introns. In Kunzea ericoides (White teatree), this protein is Maturase K.